The primary structure comprises 85 residues: U4-theraphotoxin-Hhn1p (85 aa).

Positions 1-22 are cleaved as a signal peptide; it reads MKMTLIAIPTCAAVLVLHTTAA. Residues 23–48 constitute a propeptide that is removed on maturation; that stretch reads EELEAESQLMEVGMPDTELEAVDGER. Intrachain disulfides connect cysteine 52-cysteine 66, cysteine 56-cysteine 77, and cysteine 71-cysteine 82.

Belongs to the neurotoxin 12 (Hwtx-2) family. 02 (Hwtx-2) subfamily. Expressed by the venom gland.

The protein localises to the secreted. Its function is as follows. Postsynaptic neurotoxin. The sequence is that of U4-theraphotoxin-Hhn1p from Cyriopagopus hainanus (Chinese bird spider).